The chain runs to 261 residues: Cytochrome c oxidase subunit 3 (261 aa).

Residues 1 to 15 (MTHQTHAYHMVNPSP) lie on the Mitochondrial matrix side of the membrane. A helical membrane pass occupies residues 16 to 34 (WPLTGALSALLLTSGLMMW). The Mitochondrial intermembrane segment spans residues 35 to 40 (FHFNNP). Residues 41-66 (TLLVLGLLTNLISSYQWWRDIVREGT) traverse the membrane as a helical segment. Over 67 to 72 (YQGHHT) the chain is Mitochondrial matrix. The helical transmembrane segment at 73–105 (KVVQKGLRYGMVLFIISEVFFFLGFFWAFYHSS) threads the bilayer. At 106-128 (LAPTPELGGCWPPTGISPLNPLE) the chain is on the mitochondrial intermembrane side. A helical membrane pass occupies residues 129–152 (VPLLNTSILLASGVSITWSHHSLM). At 153–155 (EGN) the chain is on the mitochondrial matrix side. The chain crosses the membrane as a helical span at residues 156–183 (RKQMIQALMITIALGLYFTALQAMEYYE). The Mitochondrial intermembrane portion of the chain corresponds to 184-190 (SSFTISD). A helical transmembrane segment spans residues 191–223 (GVYGSTFFVATGFHGLHVIIGTTFLITCLLRQL). Over 224 to 232 (LYHFTSNHH) the chain is Mitochondrial matrix. A helical transmembrane segment spans residues 233–256 (FGFEAAAWYWHFVDVVWLFLYVSI). The Mitochondrial intermembrane portion of the chain corresponds to 257-261 (YWWGS).

It belongs to the cytochrome c oxidase subunit 3 family. In terms of assembly, component of the cytochrome c oxidase (complex IV, CIV), a multisubunit enzyme composed of 14 subunits. The complex is composed of a catalytic core of 3 subunits MT-CO1, MT-CO2 and MT-CO3, encoded in the mitochondrial DNA, and 11 supernumerary subunits COX4I, COX5A, COX5B, COX6A, COX6B, COX6C, COX7A, COX7B, COX7C, COX8 and NDUFA4, which are encoded in the nuclear genome. The complex exists as a monomer or a dimer and forms supercomplexes (SCs) in the inner mitochondrial membrane with NADH-ubiquinone oxidoreductase (complex I, CI) and ubiquinol-cytochrome c oxidoreductase (cytochrome b-c1 complex, complex III, CIII), resulting in different assemblies (supercomplex SCI(1)III(2)IV(1) and megacomplex MCI(2)III(2)IV(2)).

The protein resides in the mitochondrion inner membrane. It carries out the reaction 4 Fe(II)-[cytochrome c] + O2 + 8 H(+)(in) = 4 Fe(III)-[cytochrome c] + 2 H2O + 4 H(+)(out). Functionally, component of the cytochrome c oxidase, the last enzyme in the mitochondrial electron transport chain which drives oxidative phosphorylation. The respiratory chain contains 3 multisubunit complexes succinate dehydrogenase (complex II, CII), ubiquinol-cytochrome c oxidoreductase (cytochrome b-c1 complex, complex III, CIII) and cytochrome c oxidase (complex IV, CIV), that cooperate to transfer electrons derived from NADH and succinate to molecular oxygen, creating an electrochemical gradient over the inner membrane that drives transmembrane transport and the ATP synthase. Cytochrome c oxidase is the component of the respiratory chain that catalyzes the reduction of oxygen to water. Electrons originating from reduced cytochrome c in the intermembrane space (IMS) are transferred via the dinuclear copper A center (CU(A)) of subunit 2 and heme A of subunit 1 to the active site in subunit 1, a binuclear center (BNC) formed by heme A3 and copper B (CU(B)). The BNC reduces molecular oxygen to 2 water molecules using 4 electrons from cytochrome c in the IMS and 4 protons from the mitochondrial matrix. The chain is Cytochrome c oxidase subunit 3 (MT-CO3) from Tachyglossus aculeatus aculeatus (Southeast Australian short-beaked echidna).